We begin with the raw amino-acid sequence, 727 residues long: Testis anion transporter 1 (727 aa).

At 1 to 23 (MLTIFPFLEWMCMYRLKDWLLGD) the chain is on the cytoplasmic side. Residues 24–44 (LLAGISVGLVQVPQGLTLSLL) traverse the membrane as a helical segment. Over 45–47 (ARQ) the chain is Extracellular. The chain crosses the membrane as a helical span at residues 48–68 (LIPPLNIAYAAFCSSVIYVIF). Topologically, residues 69-74 (GSCHQM) are cytoplasmic. A helical membrane pass occupies residues 75–95 (SIGSFFLVSALLINVLKISPL). The Extracellular portion of the chain corresponds to 96 to 130 (NNGHLVMGSFLKDEFSAPSYLMGYNKSLSVVATTT). An N-linked (GlcNAc...) asparagine glycan is attached at asparagine 120. A helical transmembrane segment spans residues 131-151 (FLTGIIQLIMGVLGLGFIATY). The Cytoplasmic segment spans residues 152–160 (LPESAMSAY). The helical transmembrane segment at 161 to 181 (LAAVALHIMLSQLTCIFGIMI) threads the bilayer. Over 182–198 (SFHAGPISFFYDIINYC) the chain is Extracellular. A helical transmembrane segment spans residues 199 to 219 (VALPKANSTSILLFLTVVVAL). Residues 220-235 (RINKCIRISFNQYPIE) lie on the Cytoplasmic side of the membrane. A helical transmembrane segment spans residues 236–256 (FPMELFLIIGFTVIGNKITMA). Residues 257-283 (TETSQTLIDMIPYSFLFPVTPDFSVLP) lie on the Extracellular side of the membrane. Residues 284–304 (KIILQAISLSLVSSFLLVFLG) traverse the membrane as a helical segment. The Cytoplasmic portion of the chain corresponds to 305 to 360 (KKIASLHNYSVNSNQDLIAIGLCNVVSSFFRSCVFTGAVARTIIQDKSGGRQQFAS). Residues 361 to 381 (LVGAGVMLLLMVKMGHFFYAL) form a helical membrane-spanning segment. Residues 382–383 (PN) are Extracellular-facing. A helical membrane pass occupies residues 384 to 404 (AVLAGIILSNVVPYLETISNL). Topologically, residues 405–424 (PSLWRQDQYDCALWMMTFSS) are cytoplasmic. Residues 425-445 (SIFLGLDIGLIISVVSAFFIT) traverse the membrane as a helical segment. Topologically, residues 446 to 727 (SVRSHRAKIL…LPSFHLQHIF (282 aa)) are extracellular. The STAS domain occupies 471–722 (DYREIITIPG…NSLSRLPSFH (252 aa)). Positions 592–727 (TVSSMSQKNQ…LPSFHLQHIF (136 aa)) are interaction with RACGAP1.

This sequence belongs to the SLC26A/SulP transporter (TC 2.A.53) family. Interacts with RACGAP1. Interacts with CFTR; stimulates anion transport activity of CFTR. Post-translationally, N-glycosylated.

It is found in the membrane. The enzyme catalyses sulfate(out) + chloride(in) = sulfate(in) + chloride(out). It catalyses the reaction oxalate(in) + chloride(out) = oxalate(out) + chloride(in). Functionally, antiporter that mediates the exchange of sulfate and oxalate against chloride ions across a membrane. Stimulates anion transport activity of CFTR. May cooperate with CFTR in the regulation of chloride and bicarbonate ions fluxes required for activation of the ADCY10/PKA pathway during sperm motility and sperm capacitation. May play a role in sperm tail differentiation and motility and hence male fertility. This Macaca fascicularis (Crab-eating macaque) protein is Testis anion transporter 1.